The primary structure comprises 539 residues: Phosphoenolpyruvate carboxykinase (ATP) (539 aa).

Substrate-binding residues include R61, Y195, and K201. ATP is bound by residues K201, H220, and 238–246 (GLSGTGKTT). Residues K201 and H220 each coordinate Mn(2+). D259 is a binding site for Mn(2+). Positions 287, 325, and 450 each coordinate ATP. A substrate-binding site is contributed by R325.

It belongs to the phosphoenolpyruvate carboxykinase (ATP) family. The cofactor is Mn(2+).

The protein resides in the cytoplasm. It carries out the reaction oxaloacetate + ATP = phosphoenolpyruvate + ADP + CO2. Its pathway is carbohydrate biosynthesis; gluconeogenesis. Functionally, involved in the gluconeogenesis. Catalyzes the conversion of oxaloacetate (OAA) to phosphoenolpyruvate (PEP) through direct phosphoryl transfer between the nucleoside triphosphate and OAA. The protein is Phosphoenolpyruvate carboxykinase (ATP) of Methylobacterium radiotolerans (strain ATCC 27329 / DSM 1819 / JCM 2831 / NBRC 15690 / NCIMB 10815 / 0-1).